Here is a 487-residue protein sequence, read N- to C-terminus: Melanopsin (487 aa).

The disordered stretch occupies residues 1–37 (MNPPSGPRTQEPSCVATPASPSRWDGYRSSTSSLDQP). The Extracellular segment spans residues 1-67 (MNPPSGPRTQ…VDVPDHAHYT (67 aa)). Residues 68 to 88 (LGTVILLVGLTGILGNLMVIY) form a helical membrane-spanning segment. At 89-102 (TFCRSRGLRTPANM) the chain is on the cytoplasmic side. The helical transmembrane segment at 103–123 (FIINLAVSDFFMSFTQAPVFF) threads the bilayer. At 124–139 (ASSLHKRWLFGEAGCE) the chain is on the extracellular side. C138 and C216 are disulfide-bonded. A helical transmembrane segment spans residues 140-160 (FYAFCGALFGITSMITLMAIA). Over 161–183 (LDRYLVITHPLATIGVVSKRRAA) the chain is Cytoplasmic. The helical transmembrane segment at 184-204 (LVLLGVWLYALAWSLPPFFGW) threads the bilayer. Residues 205 to 233 (SAYVPEGLLTSCSWDYMSFTPSVRAYTML) are Extracellular-facing. A helical membrane pass occupies residues 234–254 (LFCFVFFLPLLVIVYCYIFIF). Topologically, residues 255 to 291 (RAIRETGQALQTFRACEGGGRSPRQRQRLQREWKMAK) are cytoplasmic. Residues 292–312 (IELLVILLFVLSWAPYSIVAL) traverse the membrane as a helical segment. The Extracellular portion of the chain corresponds to 313-327 (MAFAGYAHVLTPYMN). The chain crosses the membrane as a helical span at residues 328 to 348 (SVPAVIAKASAIHNPIIYAIT). K335 carries the N6-(retinylidene)lysine modification. At 349 to 487 (HPKYRMAIAQ…LPLHPGWAFH (139 aa)) the chain is on the cytoplasmic side. The interval 436 to 459 (CSQGLEDREAKAPVRPQGREAETP) is disordered. Residues 440 to 457 (LEDREAKAPVRPQGREAE) are compositionally biased toward basic and acidic residues.

It belongs to the G-protein coupled receptor 1 family. Opsin subfamily. In terms of tissue distribution, eye. Expression is restricted within the ganglion cell layer.

It is found in the cell membrane. It localises to the cell projection. The protein resides in the axon. Its subcellular location is the dendrite. The protein localises to the perikaryon. Its function is as follows. Photoreceptor that binds cis-retinaldehydes. Contributes to pupillar reflex, photoentrainment and other non-image forming responses to light. May be involved in the optokinetic visual tracking response. May be involved in the regulation of retinal hyaloid vessel growth and regression. The sequence is that of Melanopsin (OPN4) from Felis catus (Cat).